The sequence spans 75 residues: UPF0352 protein YejL (75 aa).

It belongs to the UPF0352 family.

The chain is UPF0352 protein YejL from Shigella sonnei (strain Ss046).